Reading from the N-terminus, the 159-residue chain is Large ribosomal subunit protein uL15 (159 aa).

The segment covering 1–18 has biased composition (basic and acidic residues); it reads MKLNEIKDNEGSSKDRIR. Positions 1–39 are disordered; it reads MKLNEIKDNEGSSKDRIRVGRGIGSGKGKTGGRGVKGQK. Residues 21-35 show a composition bias toward gly residues; the sequence is RGIGSGKGKTGGRGV.

The protein belongs to the universal ribosomal protein uL15 family. In terms of assembly, part of the 50S ribosomal subunit.

Its function is as follows. Binds to the 23S rRNA. This chain is Large ribosomal subunit protein uL15, found in Allorhizobium ampelinum (strain ATCC BAA-846 / DSM 112012 / S4) (Agrobacterium vitis (strain S4)).